We begin with the raw amino-acid sequence, 404 residues long: Putative transporter AmpG 2 (404 aa).

12 consecutive transmembrane segments (helical) span residues 11 to 31 (IYNILFILFISLPGGLIYLLT), 49 to 69 (IGLFSLVNFIHIFKFLWGPLL), 84 to 104 (YCLIFSLLSCICCVYILTGFN), 109 to 129 (FISFSLCLIILAFFSSIYDML), 154 to 174 (FRIGILISGSGALYLSTIISW), 177 to 197 (VYRTMAILCVPSLLLIIFYPL), 224 to 244 (WLIIVGFMLLYRLQDNFLAVM), 261 to 281 (LGYKAFGMCATIAGGFIGGFL), 294 to 311 (VLVYHALSSITFLLLYSY), 315 to 337 (ITTLYIAVFLQEFTKGLTMSPFF), 353 to 373 (IALITSIAYISTVLFGSISGY), and 378 to 398 (LGWGYFFAIASFCFIPAYILI).

Belongs to the major facilitator superfamily.

It is found in the cell inner membrane. In Rickettsia bellii (strain RML369-C), this protein is Putative transporter AmpG 2 (ampG2).